The following is a 235-amino-acid chain: Ribose-5-phosphate isomerase A (235 aa).

Substrate-binding positions include 32–35, 89–92, and 102–105; these read TGST, DGAD, and KGGG. Glu-111 (proton acceptor) is an active-site residue. A substrate-binding site is contributed by Lys-129.

The protein belongs to the ribose 5-phosphate isomerase family. Homodimer.

It catalyses the reaction aldehydo-D-ribose 5-phosphate = D-ribulose 5-phosphate. Its pathway is carbohydrate degradation; pentose phosphate pathway; D-ribose 5-phosphate from D-ribulose 5-phosphate (non-oxidative stage): step 1/1. Its function is as follows. Catalyzes the reversible conversion of ribose-5-phosphate to ribulose 5-phosphate. The sequence is that of Ribose-5-phosphate isomerase A from Synechocystis sp. (strain ATCC 27184 / PCC 6803 / Kazusa).